A 201-amino-acid chain; its full sequence is MDSEQINVNLDIGAKAVMLARRAAAAKLNNEKLPEVPDDPIFHEKHGVFTTINTYPDNQLRGCIGFPEPYYELGEGIIKSSIYAATDDPRFDPMEPDELNRVTFELSILTVPQEVTVNPEERPKAITVGKDGIIAVYNGASGLLLPQVATEYRMSAEEFLEALCEKAGLWQGCWKYKKVKISKFQAIVFGEIEPNGKVEQR.

An AMMECR1 domain is found at 11–200 (DIGAKAVMLA…EIEPNGKVEQ (190 aa)).

The protein is Protein TV1384 of Thermoplasma volcanium (strain ATCC 51530 / DSM 4299 / JCM 9571 / NBRC 15438 / GSS1).